The sequence spans 75 residues: Tautomerase PptA (75 aa).

P2 (proton acceptor; via imino nitrogen) is an active-site residue.

It belongs to the 4-oxalocrotonate tautomerase family. PptA subfamily. In terms of assembly, homodimer.

The protein resides in the cytoplasm. The protein is Tautomerase PptA of Shigella sonnei (strain Ss046).